The primary structure comprises 350 residues: MIQIKNLKKEYRTNNTSNLVLDNINLEIKQGEIFGIIGHSGAGKSSLLRCLNLLEQPTDGSIFIADENITKKNSKQLREFRKKVAMIFQHFNLLSSRNVFENIALPLEIQGIPKSEIKKRVFELLDLVELPNKANAYPQELSGGQKQKVAIARALALNPLVLLSDEATSALDPTSTKQILALLKRLNKELGLTIVLITHEMDVVRKICDRVAIIDKGRIAEMGKTLDVFLNPQAPVTRSFVETSIHTKVPDFIAKKLQDNPYSYDNTYPVVQLTFYGDKGKMPIIAEISRQFNATASIIQANIETIQDQIVGIAICHITGERQDWENALRFLSNQDVNLKVLGYATADNI.

The region spanning I2–V241 is the ABC transporter domain. G38–S45 is an ATP binding site.

The protein belongs to the ABC transporter superfamily. Methionine importer (TC 3.A.1.24) family. As to quaternary structure, the complex is composed of two ATP-binding proteins (MetN), two transmembrane proteins (MetI) and a solute-binding protein (MetQ).

It is found in the cell inner membrane. The enzyme catalyses L-methionine(out) + ATP + H2O = L-methionine(in) + ADP + phosphate + H(+). It carries out the reaction D-methionine(out) + ATP + H2O = D-methionine(in) + ADP + phosphate + H(+). Its function is as follows. Part of the ABC transporter complex MetNIQ involved in methionine import. Responsible for energy coupling to the transport system. This chain is Methionine import ATP-binding protein MetN, found in Francisella tularensis subsp. holarctica (strain LVS).